We begin with the raw amino-acid sequence, 535 residues long: Ribonuclease Y 2 (535 aa).

The chain crosses the membrane as a helical span at residues 1-21 (MLITGLIIGCLLIGLVIGYVV). The KH domain occupies 207 to 268 (LEHTVTVPNG…IRREVARVAL (62 aa)). An HD domain is found at 334-427 (VLLHSIEVAQ…VAAADAISGA (94 aa)).

This sequence belongs to the RNase Y family.

The protein localises to the cell membrane. In terms of biological role, endoribonuclease that initiates mRNA decay. The chain is Ribonuclease Y 2 from Levilactobacillus brevis (strain ATCC 367 / BCRC 12310 / CIP 105137 / JCM 1170 / LMG 11437 / NCIMB 947 / NCTC 947) (Lactobacillus brevis).